A 345-amino-acid polypeptide reads, in one-letter code: tRNA-dihydrouridine(20/20a) synthase (345 aa).

Residues 32–34 and Gln-84 each bind FMN; that span reads PML. The active-site Proton donor is the Cys-114. FMN contacts are provided by residues Lys-153, His-186, 226–228, and 248–249; these read NGG and GR.

It belongs to the Dus family. DusA subfamily. FMN serves as cofactor.

The catalysed reaction is 5,6-dihydrouridine(20) in tRNA + NADP(+) = uridine(20) in tRNA + NADPH + H(+). It catalyses the reaction 5,6-dihydrouridine(20) in tRNA + NAD(+) = uridine(20) in tRNA + NADH + H(+). The enzyme catalyses 5,6-dihydrouridine(20a) in tRNA + NADP(+) = uridine(20a) in tRNA + NADPH + H(+). It carries out the reaction 5,6-dihydrouridine(20a) in tRNA + NAD(+) = uridine(20a) in tRNA + NADH + H(+). Functionally, catalyzes the synthesis of 5,6-dihydrouridine (D), a modified base found in the D-loop of most tRNAs, via the reduction of the C5-C6 double bond in target uridines. Specifically modifies U20 and U20a in tRNAs. The sequence is that of tRNA-dihydrouridine(20/20a) synthase from Escherichia coli O157:H7.